We begin with the raw amino-acid sequence, 532 residues long: NADH-quinone oxidoreductase subunit N 2 (532 aa).

The next 14 membrane-spanning stretches (helical) occupy residues 37–57, 63–83, 107–127, 133–153, 158–178, 192–212, 241–261, 276–296, 302–322, 336–356, 367–387, 411–431, 444–464, and 504–524; these read VAPP…DLFL, RLLG…LIPL, FTLV…LLSL, LPAG…ALLP, LATL…LVGI, FFLS…FVYA, VALT…HFWV, LSVV…VVAF, VWGP…NVAA, LLAW…AAAA, VAYA…AAVV, LALG…IGLF, GLGW…YYYL, and TAIV…QTVL.

It belongs to the complex I subunit 2 family. In terms of assembly, NDH-1 is composed of 14 different subunits. Subunits NuoA, H, J, K, L, M, N constitute the membrane sector of the complex.

The protein resides in the cell membrane. It catalyses the reaction a quinone + NADH + 5 H(+)(in) = a quinol + NAD(+) + 4 H(+)(out). NDH-1 shuttles electrons from NADH, via FMN and iron-sulfur (Fe-S) centers, to quinones in the respiratory chain. The immediate electron acceptor for the enzyme in this species is believed to be a menaquinone. Couples the redox reaction to proton translocation (for every two electrons transferred, four hydrogen ions are translocated across the cytoplasmic membrane), and thus conserves the redox energy in a proton gradient. The protein is NADH-quinone oxidoreductase subunit N 2 of Streptomyces griseus subsp. griseus (strain JCM 4626 / CBS 651.72 / NBRC 13350 / KCC S-0626 / ISP 5235).